Reading from the N-terminus, the 105-residue chain is Ferredoxin (105 aa).

[3Fe-4S] cluster is bound by residues cysteine 8 and cysteine 16. 4 residues coordinate [4Fe-4S] cluster: cysteine 20, cysteine 39, cysteine 42, and cysteine 45. Positions 30–59 constitute a 4Fe-4S ferredoxin-type domain; the sequence is RSLYIHPDECVDCGACEPVCPVEAIFYEDD. Cysteine 49 lines the [3Fe-4S] cluster pocket.

The cofactor is [4Fe-4S] cluster. It depends on [3Fe-4S] cluster as a cofactor.

In terms of biological role, ferredoxins are iron-sulfur proteins that transfer electrons in a wide variety of metabolic reactions. Putative electron transport protein for the cytochrome P-450SOY system from the same organism. This is Ferredoxin from Streptomyces griseus.